We begin with the raw amino-acid sequence, 161 residues long: Phosphopantetheine adenylyltransferase (161 aa).

A substrate-binding site is contributed by Thr-9. Residues Thr-9–Phe-10 and His-17 each bind ATP. Substrate-binding residues include Lys-41, Leu-73, and Arg-87. ATP-binding positions include Gly-88–Arg-90, Glu-98, and Leu-123–Thr-129.

This sequence belongs to the bacterial CoaD family. As to quaternary structure, homohexamer. Mg(2+) serves as cofactor.

It localises to the cytoplasm. It carries out the reaction (R)-4'-phosphopantetheine + ATP + H(+) = 3'-dephospho-CoA + diphosphate. Its pathway is cofactor biosynthesis; coenzyme A biosynthesis; CoA from (R)-pantothenate: step 4/5. Functionally, reversibly transfers an adenylyl group from ATP to 4'-phosphopantetheine, yielding dephospho-CoA (dPCoA) and pyrophosphate. This is Phosphopantetheine adenylyltransferase from Hahella chejuensis (strain KCTC 2396).